Consider the following 302-residue polypeptide: Small ribosomal subunit biogenesis GTPase RsgA (302 aa).

A CP-type G domain is found at 75–233; that stretch reads KNELIRPAVS…IMDTPGFSSM (159 aa). Residues 124–127 and 175–183 contribute to the GTP site; these read NKKD and GPSGVGKSS. Cysteine 257, cysteine 262, histidine 264, and cysteine 270 together coordinate Zn(2+).

Belongs to the TRAFAC class YlqF/YawG GTPase family. RsgA subfamily. Monomer. Associates with 30S ribosomal subunit, binds 16S rRNA. Zn(2+) serves as cofactor.

The protein localises to the cytoplasm. Functionally, one of several proteins that assist in the late maturation steps of the functional core of the 30S ribosomal subunit. Helps release RbfA from mature subunits. May play a role in the assembly of ribosomal proteins into the subunit. Circularly permuted GTPase that catalyzes slow GTP hydrolysis, GTPase activity is stimulated by the 30S ribosomal subunit. The sequence is that of Small ribosomal subunit biogenesis GTPase RsgA from Agathobacter rectalis (strain ATCC 33656 / DSM 3377 / JCM 17463 / KCTC 5835 / VPI 0990) (Eubacterium rectale).